Reading from the N-terminus, the 638-residue chain is 9-cis-epoxycarotenoid dioxygenase NCED1, chloroplastic (638 aa).

The N-terminal 80 residues, 1-80 (MQRICPAHCS…QTEQEDEQLV (80 aa)), are a transit peptide targeting the chloroplast. 3 stretches are compositionally biased toward low complexity: residues 28-37 (AASAAPQSPS), 44-69 (ASAAPPSAAASTTVLTSPLVTTTRTP), and 92-102 (TTNGRAAPSQS). Disordered stretches follow at residues 28–80 (AASA…EQLV) and 92–113 (TTNGRAAPSQSRPRRRPAPAAA). Fe cation contacts are provided by H331, H380, H446, and H624.

It belongs to the carotenoid oxygenase family. It depends on Fe(2+) as a cofactor.

Its subcellular location is the plastid. It is found in the chloroplast. It catalyses the reaction a 9-cis-epoxycarotenoid + O2 = a 12'-apo-carotenal + 2-cis,4-trans-xanthoxin. It carries out the reaction 9-cis-violaxanthin + O2 = (3S,5R,6S)-5,6-epoxy-3-hydroxy-5,6-dihydro-12'-apo-beta-caroten-12'-al + 2-cis,4-trans-xanthoxin. The catalysed reaction is 9'-cis-neoxanthin + O2 = (3S,5R,6R)-3,5-dihydroxy-6,7-didehydro-5,6-dihydro-12'-apo-beta-caroten-12'-al + 2-cis,4-trans-xanthoxin. Its function is as follows. Has a 11,12(11',12') 9-cis epoxycarotenoid cleavage activity. Catalyzes the first step of abscisic-acid biosynthesis from carotenoids. The chain is 9-cis-epoxycarotenoid dioxygenase NCED1, chloroplastic from Oryza sativa subsp. japonica (Rice).